Consider the following 162-residue polypeptide: Superoxide dismutase [Cu-Zn] (162 aa).

Residues 1 to 20 (MNKSGIILIGTILFSSMAIA) form the signal peptide. Cu cation-binding residues include His-66, His-68, and His-83. The cysteines at positions 73 and 158 are disulfide-linked. Positions 83, 92, 100, and 103 each coordinate Zn(2+). Residue His-137 coordinates Cu cation.

The protein belongs to the Cu-Zn superoxide dismutase family. In terms of assembly, homodimer. Cu cation is required as a cofactor. The cofactor is Zn(2+).

It localises to the periplasm. The enzyme catalyses 2 superoxide + 2 H(+) = H2O2 + O2. In terms of biological role, destroys radicals which are normally produced within the cells and which are toxic to biological systems. The chain is Superoxide dismutase [Cu-Zn] (sodC) from Legionella pneumophila.